A 343-amino-acid chain; its full sequence is Tribbles homolog 2 (343 aa).

Positions 25 to 50 are disordered; that stretch reads EELSSIRSAEPSQSFSPNLGSPSPPE. Positions 29–45 are enriched in polar residues; sequence SIRSAEPSQSFSPNLGS. The 248-residue stretch at 61 to 308 folds into the Protein kinase domain; the sequence is IGKYLLLEPL…SQEILDHPWF (248 aa).

Belongs to the protein kinase superfamily. CAMK Ser/Thr protein kinase family. Tribbles subfamily.

The protein resides in the cytoplasm. It localises to the cytoskeleton. Interacts with MAPK kinases and regulates activation of MAP kinases. Does not display kinase activity. The polypeptide is Tribbles homolog 2 (Mus musculus (Mouse)).